The sequence spans 584 residues: Pectinesterase 3 (584 aa).

The signal sequence occupies residues Met1–Gly50. A propeptide spanning residues Val51–Gln266 is cleaved from the precursor. N-linked (GlcNAc...) asparagine glycans are attached at residues Asn108, Asn129, and Asn226. Residues Thr348 and Gln378 each contribute to the substrate site. Asp401 serves as the catalytic Proton donor. Cysteines 415 and 435 form a disulfide. Asp422 (nucleophile) is an active-site residue. Residues Arg490 and Trp492 each coordinate substrate.

It in the N-terminal section; belongs to the PMEI family. The protein in the C-terminal section; belongs to the pectinesterase family. In terms of tissue distribution, in the peel, expression is localized to the region of the flavedo close to the oil glands, and to the innermost layer of the albedo. In the lamella, expression is localized to the cell layers opposing the fruit tissue, and to the parenchyma surrounding the vascular tissue. In the fruit vesicles, expression is restricted to the peripheral cell layers and stalk cells. High levels of expression are detected in the core matrix.

The protein resides in the secreted. The protein localises to the cell wall. It carries out the reaction [(1-&gt;4)-alpha-D-galacturonosyl methyl ester](n) + n H2O = [(1-&gt;4)-alpha-D-galacturonosyl](n) + n methanol + n H(+). Its pathway is glycan metabolism; pectin degradation; 2-dehydro-3-deoxy-D-gluconate from pectin: step 1/5. In terms of biological role, acts in the modification of cell walls via demethylesterification of cell wall pectin. This chain is Pectinesterase 3, found in Citrus sinensis (Sweet orange).